Reading from the N-terminus, the 162-residue chain is SsrA-binding protein (162 aa).

Positions 140–162 (EDRRHDIKERETKREMDRAMRRR) are disordered.

Belongs to the SmpB family.

The protein localises to the cytoplasm. Functionally, required for rescue of stalled ribosomes mediated by trans-translation. Binds to transfer-messenger RNA (tmRNA), required for stable association of tmRNA with ribosomes. tmRNA and SmpB together mimic tRNA shape, replacing the anticodon stem-loop with SmpB. tmRNA is encoded by the ssrA gene; the 2 termini fold to resemble tRNA(Ala) and it encodes a 'tag peptide', a short internal open reading frame. During trans-translation Ala-aminoacylated tmRNA acts like a tRNA, entering the A-site of stalled ribosomes, displacing the stalled mRNA. The ribosome then switches to translate the ORF on the tmRNA; the nascent peptide is terminated with the 'tag peptide' encoded by the tmRNA and targeted for degradation. The ribosome is freed to recommence translation, which seems to be the essential function of trans-translation. The sequence is that of SsrA-binding protein from Myxococcus xanthus (strain DK1622).